Here is a 399-residue protein sequence, read N- to C-terminus: Argininosuccinate synthase (399 aa).

An ATP-binding site is contributed by 8–16 (AYSGGLDTS). Tyr87 lines the L-citrulline pocket. Position 117 (Gly117) interacts with ATP. Positions 119, 123, and 124 each coordinate L-aspartate. Asn123 contacts L-citrulline. Arg127, Ser175, Glu260, and Tyr272 together coordinate L-citrulline.

This sequence belongs to the argininosuccinate synthase family. Type 1 subfamily. As to quaternary structure, homotetramer.

It localises to the cytoplasm. The catalysed reaction is L-citrulline + L-aspartate + ATP = 2-(N(omega)-L-arginino)succinate + AMP + diphosphate + H(+). The protein operates within amino-acid biosynthesis; L-arginine biosynthesis; L-arginine from L-ornithine and carbamoyl phosphate: step 2/3. The chain is Argininosuccinate synthase from Rhodococcus erythropolis (strain PR4 / NBRC 100887).